The primary structure comprises 521 residues: Bifunctional purine biosynthesis protein PurH (521 aa).

Residues 1–145 enclose the MGS-like domain; that stretch reads MIKQALISVS…KNHRDVTVVV (145 aa).

Belongs to the PurH family.

It carries out the reaction (6R)-10-formyltetrahydrofolate + 5-amino-1-(5-phospho-beta-D-ribosyl)imidazole-4-carboxamide = 5-formamido-1-(5-phospho-D-ribosyl)imidazole-4-carboxamide + (6S)-5,6,7,8-tetrahydrofolate. The catalysed reaction is IMP + H2O = 5-formamido-1-(5-phospho-D-ribosyl)imidazole-4-carboxamide. Its pathway is purine metabolism; IMP biosynthesis via de novo pathway; 5-formamido-1-(5-phospho-D-ribosyl)imidazole-4-carboxamide from 5-amino-1-(5-phospho-D-ribosyl)imidazole-4-carboxamide (10-formyl THF route): step 1/1. It functions in the pathway purine metabolism; IMP biosynthesis via de novo pathway; IMP from 5-formamido-1-(5-phospho-D-ribosyl)imidazole-4-carboxamide: step 1/1. In Paraburkholderia phytofirmans (strain DSM 17436 / LMG 22146 / PsJN) (Burkholderia phytofirmans), this protein is Bifunctional purine biosynthesis protein PurH.